The primary structure comprises 150 residues: MKELLRLKHCKHLLTTHVHSPWTPSLTLTPSLLTLDTLTHPRHRHSSPWTPHSAPWTPSLTLDTFTHPDTLTHPGHPHSPWIPSLLTLDTLTHPGYPHSSPWTLSLTLTPSILTLDSLTPHPGLPHSSPWTPSLLILDTLTQPGHPHSSP.

As to expression, expressed in placental syncytiotrophoblast and choriocarcinoma cells.

The sequence is that of Placenta-specific protein 4 (PLAC4) from Homo sapiens (Human).